A 640-amino-acid chain; its full sequence is GATA zinc finger domain-containing protein 12 (640 aa).

Disordered regions lie at residues 121 to 209 (SNNI…NIPI) and 355 to 390 (QQIR…HINN). Low complexity-rich tracts occupy residues 122-209 (NNIP…NIPI) and 355-379 (QQIR…QHQQ). Polar residues predominate over residues 380 to 390 (PPTNIPQHINN). The GATA-type zinc-finger motif lies at 506-531 (CVNCKTSDTPEWRRGPQGAKTLCNAC).

The chain is GATA zinc finger domain-containing protein 12 (gtaL) from Dictyostelium discoideum (Social amoeba).